We begin with the raw amino-acid sequence, 208 residues long: Small ribosomal subunit protein uS4 (208 aa).

In terms of domain architecture, S4 RNA-binding spans 98–161 (RRLDNVIYRL…RKIPVIAEAQ (64 aa)).

This sequence belongs to the universal ribosomal protein uS4 family. Part of the 30S ribosomal subunit. Contacts protein S5. The interaction surface between S4 and S5 is involved in control of translational fidelity.

Functionally, one of the primary rRNA binding proteins, it binds directly to 16S rRNA where it nucleates assembly of the body of the 30S subunit. In terms of biological role, with S5 and S12 plays an important role in translational accuracy. The protein is Small ribosomal subunit protein uS4 of Nitratidesulfovibrio vulgaris (strain DSM 19637 / Miyazaki F) (Desulfovibrio vulgaris).